Here is a 1006-residue protein sequence, read N- to C-terminus: Phosphatidylinositol-3,5-bisphosphate 3-phosphatase MTMR3 (1006 aa).

Positions 1-10 (MTVTSSAAID) are enriched in low complexity. The tract at residues 1–29 (MTVTSSAAIDIGGGGGGRRSDRLDSDRTS) is disordered. Over residues 18–29 (RRSDRLDSDRTS) the composition is skewed to basic and acidic residues. In terms of domain architecture, Myotubularin phosphatase spans 224–630 (AWKFSEAVDE…INLRVWHEVF (407 aa)). A 1,2-diacyl-sn-glycero-3-phospho-(1D-myo-inositol-3,5-bisphosphate) is bound by residues Asn377, Asn402, and Ile403. Residues Asn377, Asn402, and Ile403 each contribute to the a 1,2-diacyl-sn-glycero-3-phospho-(1D-myo-inositol-3-phosphate) site. Catalysis depends on Cys463, which acts as the Phosphocysteine intermediate. A 1,2-diacyl-sn-glycero-3-phospho-(1D-myo-inositol-3,5-bisphosphate) contacts are provided by Ser464, Asp465, Gly466, Trp467, Asp468, Arg469, Lys505, and Arg509. The a 1,2-diacyl-sn-glycero-3-phospho-(1D-myo-inositol-3-phosphate) site is built by Ser464, Asp465, Gly466, Trp467, Asp468, and Arg469. Arg509 serves as a coordination point for a 1,2-diacyl-sn-glycero-3-phospho-(1D-myo-inositol-3-phosphate). The interval 641 to 705 (FSPKEERPLS…PSDNTNSLPM (65 aa)) is disordered. The segment covering 651 to 705 (GCTTPMNTSTSTNLVKSKSSESINSLNVDGSAKESSQQHPTCSTTPSDNTNSLPM) has biased composition (polar residues). The segment at 818–883 (EGESGHCAYC…ACDSCYDSMH (66 aa)) adopts an FYVE-type zinc-finger fold. Positions 824, 827, 845, 848, 853, 856, 875, and 878 each coordinate Zn(2+). The tract at residues 886 to 1006 (DLKLSSSSTT…DVLDVNEQPL (121 aa)) is disordered. 2 stretches are compositionally biased toward low complexity: residues 890-901 (SSSSTTTTSSST) and 913-926 (DNNSDNVSENVSEN). Basic and acidic residues-rich tracts occupy residues 933 to 954 (VEEKEAEDPIKEAESPSKETKC) and 976 to 985 (HSRDPLKSID).

The protein belongs to the protein-tyrosine phosphatase family. Non-receptor class myotubularin subfamily. In terms of tissue distribution, expressed in the body wall muscle and in eggs. Expressed in head neurons. Expressed in the intestine. Expressed in pharyngeal cells, vulval muscle cells and cells of the tail region.

It is found in the cytoplasm. It localises to the membrane. The catalysed reaction is a 1,2-diacyl-sn-glycero-3-phospho-(1D-myo-inositol-3,5-bisphosphate) + H2O = a 1,2-diacyl-sn-glycero-3-phospho-(1D-myo-inositol-5-phosphate) + phosphate. The enzyme catalyses a 1,2-diacyl-sn-glycero-3-phospho-(1D-myo-inositol-3-phosphate) + H2O = a 1,2-diacyl-sn-glycero-3-phospho-(1D-myo-inositol) + phosphate. It carries out the reaction 1,2-dihexadecanoyl-sn-glycero-3-phospho-(1D-myo-inositol-3-phosphate) + H2O = 1,2-dihexadecanoyl-sn-glycero-3-phospho-(1D-myo-inositol) + phosphate. It catalyses the reaction 1,2-dihexadecanoyl-sn-glycero-3-phospho-(1D-myo-inositol-3,5-phosphate) + H2O = 1,2-dihexadecanoyl-sn-glycero-3-phospho-(1D-myo-inositol-5-phosphate) + phosphate. The catalysed reaction is 1,2-dioctanoyl-sn-glycero-3-phospho-(1-D-myo-inositol-3-phosphate) + H2O = 1,2-dioctanoyl-sn-glycero-3-phospho-(1D-myo-inositol) + phosphate. With respect to regulation, inhibited by sodium vanadate and peroxide. Its function is as follows. Preferentially dephosphorylates phosphatidylinositol 3-phosphate (PI3P), and has some activity towards phosphatidylinositol 3,5-bisphosphate (PI35P). Positively regulates autophagy and is recruited to autophagosomes by PI3P where it catalyzes PI3P turnover to promote autophagosome maturation. Thought to have a role in maintenance of muscle function. Involved in locomotion and lifespan determination. This Caenorhabditis elegans protein is Phosphatidylinositol-3,5-bisphosphate 3-phosphatase MTMR3.